A 180-amino-acid chain; its full sequence is Pro-glucagon (180 aa).

The N-terminal stretch at 1–20 is a signal peptide; it reads MKSLYFVAGLFVMLVQGSWQ. Polar residues predominate over residues 25-35; that stretch reads NTEEKSSSFPA. The disordered stretch occupies residues 25–59; the sequence is NTEEKSSSFPAPQTDPLGDPDQINEDKRHSQGTFT. Ser54 is modified (phosphoserine). Positions 84-89 are excised as a propeptide; sequence NKNNIA. Phosphoserine is present on residues Ser105 and Ser108. Arg127 is subject to Arginine amide. The propeptide occupies 131 to 145; it reads DFPEEVNIVEELRRR. A phosphoserine mark is found at Ser150 and Ser152.

It belongs to the glucagon family. Proglucagon is post-translationally processed in a tissue-specific manner in pancreatic A cells and intestinal L cells. In pancreatic A cells, the major bioactive hormone is glucagon cleaved by PCSK2/PC2. In the intestinal L cells PCSK1/PC1 liberates GLP-1, GLP-2, glicentin and oxyntomodulin. GLP-1 is further N-terminally truncated by post-translational processing in the intestinal L cells resulting in GLP-1(7-37) GLP-1-(7-36)amide. The C-terminal amidation is neither important for the metabolism of GLP-1 nor for its effects on the endocrine pancreas. Glucagon is secreted in the A cells of the islets of Langerhans. GLP-1, GLP-2, oxyntomodulin and glicentin are secreted from enteroendocrine cells throughout the gastrointestinal tract.

The protein localises to the secreted. Plays a key role in glucose metabolism and homeostasis. Regulates blood glucose by increasing gluconeogenesis and decreasing glycolysis. A counterregulatory hormone of insulin, raises plasma glucose levels in response to insulin-induced hypoglycemia. Plays an important role in initiating and maintaining hyperglycemic conditions in diabetes. In terms of biological role, potent stimulator of glucose-dependent insulin release. Also stimulates insulin release in response to IL6. Plays important roles on gastric motility and the suppression of plasma glucagon levels. May be involved in the suppression of satiety and stimulation of glucose disposal in peripheral tissues, independent of the actions of insulin. Has growth-promoting activities on intestinal epithelium. May also regulate the hypothalamic pituitary axis (HPA) via effects on LH, TSH, CRH, oxytocin, and vasopressin secretion. Increases islet mass through stimulation of islet neogenesis and pancreatic beta cell proliferation. Inhibits beta cell apoptosis. Functionally, stimulates intestinal growth and up-regulates villus height in the small intestine, concomitant with increased crypt cell proliferation and decreased enterocyte apoptosis. The gastrointestinal tract, from the stomach to the colon is the principal target for GLP-2 action. Plays a key role in nutrient homeostasis, enhancing nutrient assimilation through enhanced gastrointestinal function, as well as increasing nutrient disposal. Stimulates intestinal glucose transport and decreases mucosal permeability. Its function is as follows. Significantly reduces food intake. Inhibits gastric emptying in humans. Suppression of gastric emptying may lead to increased gastric distension, which may contribute to satiety by causing a sensation of fullness. May modulate gastric acid secretion and the gastro-pyloro-duodenal activity. May play an important role in intestinal mucosal growth in the early period of life. This is Pro-glucagon (GCG) from Bos taurus (Bovine).